Reading from the N-terminus, the 197-residue chain is Recombination protein RecR (197 aa).

The C4-type zinc-finger motif lies at 56-71; that stretch reads CERCNTFTETEICQRC. The region spanning 79-174 is the Toprim domain; it reads SLLCVVEMPA…RVSRLSRGVP (96 aa).

The protein belongs to the RecR family.

Functionally, may play a role in DNA repair. It seems to be involved in an RecBC-independent recombinational process of DNA repair. It may act with RecF and RecO. This is Recombination protein RecR from Aromatoleum aromaticum (strain DSM 19018 / LMG 30748 / EbN1) (Azoarcus sp. (strain EbN1)).